We begin with the raw amino-acid sequence, 701 residues long: Elongation factor G (701 aa).

Residues 8-290 (ARYRNIGISA…AVIEYLPAPT (283 aa)) form the tr-type G domain. GTP is bound by residues 17–24 (AHIDAGKT), 88–92 (DTPGH), and 142–145 (NKMD).

This sequence belongs to the TRAFAC class translation factor GTPase superfamily. Classic translation factor GTPase family. EF-G/EF-2 subfamily.

It is found in the cytoplasm. Catalyzes the GTP-dependent ribosomal translocation step during translation elongation. During this step, the ribosome changes from the pre-translocational (PRE) to the post-translocational (POST) state as the newly formed A-site-bound peptidyl-tRNA and P-site-bound deacylated tRNA move to the P and E sites, respectively. Catalyzes the coordinated movement of the two tRNA molecules, the mRNA and conformational changes in the ribosome. This is Elongation factor G from Sodalis glossinidius (strain morsitans).